The primary structure comprises 543 residues: Terpineol synthase, chloroplastic (543 aa).

The tract at residues 1–22 (MNTEPSPNHYSAISSSDQNLTR) is disordered. Arg-263, Asp-300, Asp-304, Arg-435, and Asn-438 together coordinate (2E)-geranyl diphosphate. Mg(2+) contacts are provided by Asp-300 and Asp-304. Residues 300–304 (DDVYD) carry the DDXXD motif motif. Mg(2+) contacts are provided by Asn-438, Thr-442, and Glu-446.

Belongs to the terpene synthase family. Tpsb subfamily. In terms of assembly, monomer. The cofactor is Mg(2+). Requires Mn(2+) as cofactor. In terms of tissue distribution, confined to flowers.

The protein localises to the plastid. The protein resides in the chloroplast. It catalyses the reaction (2E)-geranyl diphosphate + H2O = (S)-alpha-terpineol + diphosphate. The catalysed reaction is (2E)-geranyl diphosphate = sabinene + diphosphate. It carries out the reaction (2E)-geranyl diphosphate = beta-myrcene + diphosphate. The enzyme catalyses (2E)-geranyl diphosphate = limonene + diphosphate. It catalyses the reaction (2E)-geranyl diphosphate + H2O = 1,8-cineole + diphosphate. Its pathway is secondary metabolite biosynthesis; terpenoid biosynthesis. Monoterpene synthase (TPS) involved in the biosynthesis of monoterpene natural products of the 'cineole cassette', volatile compounds present in floral scent. Catalyzes the conversion of (2E)-geranyl diphosphate (GPP) into alpha-terpineol and, as minor products, sabinene, beta-myrcene, limonene and 1,8-cineole. In Nicotiana alata (Winged tobacco), this protein is Terpineol synthase, chloroplastic.